The chain runs to 61 residues: IKCHNTPLPFIYKTCPEGNNLCFKGTLKFPKKITYKRGCADACPKTSALVKYVCCNTDKCN.

Disulfide bonds link C3–C22, C15–C39, C43–C54, and C55–C60.

Belongs to the three-finger toxin family. Short-chain subfamily. Orphan group XV sub-subfamily. As to expression, expressed by the venom gland.

The protein localises to the secreted. It is found in the target cell membrane. Functionally, has low cytotoxic activity. The polypeptide is Cytotoxin homolog 3 (Naja melanoleuca (Forest cobra)).